The primary structure comprises 267 residues: 3-deoxy-manno-octulosonate cytidylyltransferase (267 aa).

This sequence belongs to the KdsB family.

The protein localises to the cytoplasm. The enzyme catalyses 3-deoxy-alpha-D-manno-oct-2-ulosonate + CTP = CMP-3-deoxy-beta-D-manno-octulosonate + diphosphate. The protein operates within nucleotide-sugar biosynthesis; CMP-3-deoxy-D-manno-octulosonate biosynthesis; CMP-3-deoxy-D-manno-octulosonate from 3-deoxy-D-manno-octulosonate and CTP: step 1/1. It participates in bacterial outer membrane biogenesis; lipopolysaccharide biosynthesis. Its function is as follows. Activates KDO (a required 8-carbon sugar) for incorporation into bacterial lipopolysaccharide in Gram-negative bacteria. In Paraburkholderia phymatum (strain DSM 17167 / CIP 108236 / LMG 21445 / STM815) (Burkholderia phymatum), this protein is 3-deoxy-manno-octulosonate cytidylyltransferase.